Reading from the N-terminus, the 166-residue chain is Ribosome maturation factor RimM (166 aa).

The PRC barrel domain occupies 94 to 166 (EGEYYLGKLI…IELKVLDLLK (73 aa)).

The protein belongs to the RimM family. As to quaternary structure, binds ribosomal protein uS19.

The protein resides in the cytoplasm. An accessory protein needed during the final step in the assembly of 30S ribosomal subunit, possibly for assembly of the head region. Essential for efficient processing of 16S rRNA. May be needed both before and after RbfA during the maturation of 16S rRNA. It has affinity for free ribosomal 30S subunits but not for 70S ribosomes. This is Ribosome maturation factor RimM from Borreliella burgdorferi (strain ATCC 35210 / DSM 4680 / CIP 102532 / B31) (Borrelia burgdorferi).